The following is a 363-amino-acid chain: tRNA N6-adenosine threonylcarbamoyltransferase (363 aa).

Residues histidine 117 and histidine 121 each contribute to the Fe cation site. Substrate contacts are provided by residues 139 to 143, aspartate 172, glycine 185, and asparagine 287; that span reads LVSGG. Aspartate 315 serves as a coordination point for Fe cation.

The protein belongs to the KAE1 / TsaD family. Fe(2+) is required as a cofactor.

It localises to the cytoplasm. The enzyme catalyses L-threonylcarbamoyladenylate + adenosine(37) in tRNA = N(6)-L-threonylcarbamoyladenosine(37) in tRNA + AMP + H(+). Required for the formation of a threonylcarbamoyl group on adenosine at position 37 (t(6)A37) in tRNAs that read codons beginning with adenine. Is involved in the transfer of the threonylcarbamoyl moiety of threonylcarbamoyl-AMP (TC-AMP) to the N6 group of A37, together with TsaE and TsaB. TsaD likely plays a direct catalytic role in this reaction. The protein is tRNA N6-adenosine threonylcarbamoyltransferase of Cereibacter sphaeroides (strain ATCC 17025 / ATH 2.4.3) (Rhodobacter sphaeroides).